The primary structure comprises 317 residues: Ceramide reductase (317 aa).

The N-terminal stretch at 1-27 is a signal peptide; sequence MATDARGVVAITGATGFLGRHLVRALA.

The protein belongs to the NAD(P)-dependent epimerase/dehydratase family.

It localises to the periplasm. The enzyme catalyses N-acyl-3-oxosphinganine + NADH + H(+) = an N-acylsphinganine + NAD(+). It participates in lipid metabolism; sphingolipid metabolism. Functionally, involved in de novo bacterial ceramide synthesis. Catalyzes the reduction of bacterial oxidized ceramides to bacterial dihydroceramides. The protein is Ceramide reductase of Caulobacter vibrioides (strain NA1000 / CB15N) (Caulobacter crescentus).